A 337-amino-acid chain; its full sequence is D-lactate dehydrogenase (337 aa).

NAD(+) is bound by residues histidine 156–isoleucine 157, aspartate 176, valine 207–proline 208, asparagine 213, cysteine 234–arginine 236, and aspartate 260. Residue arginine 236 is part of the active site. Glutamate 265 is a catalytic residue. Residue histidine 297 is the Proton donor of the active site.

Belongs to the D-isomer specific 2-hydroxyacid dehydrogenase family. Homodimer.

It carries out the reaction (R)-lactate + NAD(+) = pyruvate + NADH + H(+). The polypeptide is D-lactate dehydrogenase (Lactobacillus helveticus (Lactobacillus suntoryeus)).